The chain runs to 415 residues: Serine hydroxymethyltransferase (415 aa).

Residues Leu120 and 124–126 each bind (6S)-5,6,7,8-tetrahydrofolate; that span reads GHL. At Lys229 the chain carries N6-(pyridoxal phosphate)lysine.

This sequence belongs to the SHMT family. As to quaternary structure, homodimer. Pyridoxal 5'-phosphate is required as a cofactor.

It localises to the cytoplasm. The catalysed reaction is (6R)-5,10-methylene-5,6,7,8-tetrahydrofolate + glycine + H2O = (6S)-5,6,7,8-tetrahydrofolate + L-serine. It functions in the pathway one-carbon metabolism; tetrahydrofolate interconversion. The protein operates within amino-acid biosynthesis; glycine biosynthesis; glycine from L-serine: step 1/1. In terms of biological role, catalyzes the reversible interconversion of serine and glycine with tetrahydrofolate (THF) serving as the one-carbon carrier. This reaction serves as the major source of one-carbon groups required for the biosynthesis of purines, thymidylate, methionine, and other important biomolecules. Also exhibits THF-independent aldolase activity toward beta-hydroxyamino acids, producing glycine and aldehydes, via a retro-aldol mechanism. The sequence is that of Serine hydroxymethyltransferase from Caldicellulosiruptor bescii (strain ATCC BAA-1888 / DSM 6725 / KCTC 15123 / Z-1320) (Anaerocellum thermophilum).